A 369-amino-acid polypeptide reads, in one-letter code: Chorismate synthase (369 aa).

NADP(+) contacts are provided by Arg48 and Arg54. Residues 125-127, 238-239, Gly278, 293-297, and Arg319 contribute to the FMN site; these read RSS, NA, and KPTSS.

This sequence belongs to the chorismate synthase family. As to quaternary structure, homotetramer. FMNH2 serves as cofactor.

It carries out the reaction 5-O-(1-carboxyvinyl)-3-phosphoshikimate = chorismate + phosphate. Its pathway is metabolic intermediate biosynthesis; chorismate biosynthesis; chorismate from D-erythrose 4-phosphate and phosphoenolpyruvate: step 7/7. In terms of biological role, catalyzes the anti-1,4-elimination of the C-3 phosphate and the C-6 proR hydrogen from 5-enolpyruvylshikimate-3-phosphate (EPSP) to yield chorismate, which is the branch point compound that serves as the starting substrate for the three terminal pathways of aromatic amino acid biosynthesis. This reaction introduces a second double bond into the aromatic ring system. The chain is Chorismate synthase from Nitrosococcus oceani (strain ATCC 19707 / BCRC 17464 / JCM 30415 / NCIMB 11848 / C-107).